Reading from the N-terminus, the 167-residue chain is Signal peptidase complex catalytic subunit SEC11 (167 aa).

The Cytoplasmic segment spans residues 1–9 (MNLRFELQK). A helical; Signal-anchor for type II membrane protein transmembrane segment spans residues 10 to 30 (LLNVCFLFASAYMFWQGLAIA). Residues 31–167 (TNSASPIVVV…LGLSALLGGE (137 aa)) are Lumenal-facing. Catalysis depends on charge relay system residues serine 44, histidine 83, and aspartate 109. A glycan (N-linked (GlcNAc...) asparagine) is linked at asparagine 121. The tract at residues 153 to 164 (ALLGMLGLSALL) is C-terminal short (CTS) helix.

This sequence belongs to the peptidase S26B family. As to quaternary structure, component of the signal peptidase complex (SPC) composed of a catalytic subunit SEC11 and three accessory subunits SPC1, SPC2 and SPC3. The complex induces a local thinning of the ER membrane which is used to measure the length of the signal peptide (SP) h-region of protein substrates. This ensures the selectivity of the complex towards h-regions shorter than 18-20 amino acids. SPC associates with the translocon complex.

It localises to the endoplasmic reticulum membrane. The enzyme catalyses Cleavage of hydrophobic, N-terminal signal or leader sequences from secreted and periplasmic proteins.. Functionally, catalytic component of the signal peptidase complex (SPC) which catalyzes the cleavage of N-terminal signal sequences from nascent proteins as they are translocated into the lumen of the endoplasmic reticulum. Specifically cleaves N-terminal signal peptides that contain a hydrophobic alpha-helix (h-region) shorter than 18-20 amino acids. The protein is Signal peptidase complex catalytic subunit SEC11 (SEC11) of Saccharomyces cerevisiae (strain Lalvin QA23) (Baker's yeast).